The primary structure comprises 196 residues: Type-4 uracil-DNA glycosylase (196 aa).

[4Fe-4S] cluster is bound by residues Cys13 and Cys16. Uracil contacts are provided by residues 40–42 (GEA), Phe54, and Asn80. The [4Fe-4S] cluster site is built by Cys84 and Cys100. His162 provides a ligand contact to uracil.

Belongs to the uracil-DNA glycosylase (UDG) superfamily. Type 4 (UDGa) family.

It carries out the reaction Hydrolyzes single-stranded DNA or mismatched double-stranded DNA and polynucleotides, releasing free uracil.. In terms of biological role, removes uracil bases that are present in DNA as a result of either deamination of cytosine or misincorporation of dUMP instead of dTMP. Can remove uracil from double-stranded DNA containing either a U/G or U/A base pair as well as from single-stranded DNA. This Pyrobaculum aerophilum (strain ATCC 51768 / DSM 7523 / JCM 9630 / CIP 104966 / NBRC 100827 / IM2) protein is Type-4 uracil-DNA glycosylase.